The following is a 58-amino-acid chain: Potassium channel toxin alpha-KTx BmKcug1a (58 aa).

The N-terminal stretch at 1 to 21 (MKISFLLLLAIVICSIGWTEA) is a signal peptide. Q22 is modified (pyrrolidone carboxylic acid). 3 disulfide bridges follow: C28–C49, C34–C54, and C38–C56.

The protein belongs to the short scorpion toxin superfamily. Potassium channel inhibitor family. Alpha-KTx 01 subfamily. In terms of tissue distribution, expressed by the venom gland.

The protein localises to the secreted. Functionally, potent blocker of both large-conductance calcium-activated potassium channels (KCa1.1/KCNMA1) and voltage-gated potassium channels (Kv1.3/KCNA3 and ERG1/Kv11.1/KCNH2). The protein is Potassium channel toxin alpha-KTx BmKcug1a of Olivierus martensii (Manchurian scorpion).